Consider the following 1293-residue polypeptide: MEIIRGAPALSTFRVQKLMEACVNAALPVRQIYAEYVHLADLSELLETNEREQLEKILTYGPAIEAHTPQGSLLFVTPRPGTISPWSSKATDIAHNCGLGKVKRLERGVAYYVESDTLTVEQQQTLKGLLHDRMVEVVLDDFAKADVLFKRTEPAPFKSVNVLAEGRRALEVANVEMGLALAEDEIDYLVENFVRLNRNPNDIELMMFAQANSEHCRHKIFNADWTIDGEAQPKSLFKMIKNTFETTPDHVLSAYKDNAAVMEGSVAGRFFPDPNGVYSYHTEPMHVLMKVETHNHPTAISPYPGAATGSGGEIRDEGATGRGSKPKAGLTGFSVSNLKIPGFVQPWEGSYGKPDRIVSALDIMTEGPLGGAAFNNEFGRPALLGYFRTYEQEVSSHNGVEVRGYHKPIMLAGGLGNIREEHVQKGEITVGAKLIVLGGPAMNIGLGGGAASSMASGQSSEDLDFASVQRENPEMERRCQEVIDRCWQLGDKNPIQFIHDVGAGGLSNAFPELVNDGGRGGIFNLRNVPSDEPGMSPLEIWCNESQERYVLSVAAEDLPLFTAICERERAPFAVVGEATQEQHLTLADSHFDNNPIDLPLEVLLGKAPKMSRNVVSAKAVSPALEQSNIDVKEAVKRILSLPTVADKTFLITIGDRTVTGLVNRDQMVGPWQVPVADCAVTAASFDTYAGEAMSMGERTPLALLDFGASARMAVAESIMNIAGADIGSFKRIKLSANWMSAAGHPGEDAGLYEAVKAVGEELCPELSLTIPVGKDSMSMKTAWQQDGANKTVTAPMSLVISAFGVVQDIRNTVTPELRSDKGETSLLLVDLGAGKNRLGGSCLAQVYGELGDIAPDLDDAALLRGFFETMQKLVAKKSVIAYHDRSDGGLFTTLVEMAFAGNTGLSIDLSALQGTDVERLFNEELGGVLQVSRADAELIAAQFAQAGVPCHMIGTLANDQRVTIKDGAREVFSETRVALRTLWSETTYRMQALRDNPACALEEFKLKQDETDLGLTVNLSFDPSEDVAAPYILKGAAPKMAILREQGVNSHVEMAAAFDRAGFESLDVHMSDILSGRISLEEFQGLVACGGFSYGDVLGAGEGWAKSILFNERARDEFSRFFERDSSFALGVCNGCQMLSNLKEIIPGSEHWPRFVRNRSERFEARFSLVEVQQSPSLFFQGMAGSRMPIAVSHGEGHAEFASAQALALAEASGTIALRFVNGNGEIATQYPQNPNGSPNGLTGICTTDGRVTLMMPHPERVFRTVANSWHPDNWGEDSPWMRMFRNARVNLG.

ATP is bound by residues 305 to 316 (GAATGSGGEIRD) and alanine 676. Residues 305-327 (GAATGSGGEIRDEGATGRGSKPK) form a disordered region. Positions 677, 716, 720, and 884 each coordinate Mg(2+). ATP is bound at residue serine 886. One can recognise a Glutamine amidotransferase type-1 domain in the interval 1040–1293 (MAILREQGVN…MFRNARVNLG (254 aa)). Cysteine 1133 acts as the Nucleophile in catalysis. Catalysis depends on residues histidine 1258 and glutamate 1260.

This sequence in the N-terminal section; belongs to the FGAMS family. As to quaternary structure, monomer.

Its subcellular location is the cytoplasm. The catalysed reaction is N(2)-formyl-N(1)-(5-phospho-beta-D-ribosyl)glycinamide + L-glutamine + ATP + H2O = 2-formamido-N(1)-(5-O-phospho-beta-D-ribosyl)acetamidine + L-glutamate + ADP + phosphate + H(+). Its pathway is purine metabolism; IMP biosynthesis via de novo pathway; 5-amino-1-(5-phospho-D-ribosyl)imidazole from N(2)-formyl-N(1)-(5-phospho-D-ribosyl)glycinamide: step 1/2. Its function is as follows. Phosphoribosylformylglycinamidine synthase involved in the purines biosynthetic pathway. Catalyzes the ATP-dependent conversion of formylglycinamide ribonucleotide (FGAR) and glutamine to yield formylglycinamidine ribonucleotide (FGAM) and glutamate. This chain is Phosphoribosylformylglycinamidine synthase, found in Shewanella sp. (strain MR-4).